Reading from the N-terminus, the 242-residue chain is Biosynthetic peptidoglycan transglycosylase (242 aa).

The chain crosses the membrane as a helical span at residues 15–35; it reads FLLLLMVVLAVFWGGGIALFS.

This sequence belongs to the glycosyltransferase 51 family.

It is found in the cell inner membrane. The catalysed reaction is [GlcNAc-(1-&gt;4)-Mur2Ac(oyl-L-Ala-gamma-D-Glu-L-Lys-D-Ala-D-Ala)](n)-di-trans,octa-cis-undecaprenyl diphosphate + beta-D-GlcNAc-(1-&gt;4)-Mur2Ac(oyl-L-Ala-gamma-D-Glu-L-Lys-D-Ala-D-Ala)-di-trans,octa-cis-undecaprenyl diphosphate = [GlcNAc-(1-&gt;4)-Mur2Ac(oyl-L-Ala-gamma-D-Glu-L-Lys-D-Ala-D-Ala)](n+1)-di-trans,octa-cis-undecaprenyl diphosphate + di-trans,octa-cis-undecaprenyl diphosphate + H(+). Its pathway is cell wall biogenesis; peptidoglycan biosynthesis. Peptidoglycan polymerase that catalyzes glycan chain elongation from lipid-linked precursors. The chain is Biosynthetic peptidoglycan transglycosylase from Shigella sonnei (strain Ss046).